We begin with the raw amino-acid sequence, 528 residues long: Na(+)/H(+) antiporter NhaB (528 aa).

A run of 11 helical transmembrane segments spans residues 23–43 (VAII…DPFV), 45–65 (GWLL…CYPL), 90–110 (LVAN…IYFM), 136–156 (CFAA…AVVI), 204–224 (LLMH…VGEP), 242–262 (IRMA…CAIV), 305–325 (GLIA…VGLI), 350–370 (EEAL…AVII), 392–412 (LALF…VFVG), 450–470 (ATPN…APLI), and 479–499 (IMAL…IMFF).

Belongs to the NhaB Na(+)/H(+) (TC 2.A.34) antiporter family.

The protein resides in the cell inner membrane. The enzyme catalyses 2 Na(+)(in) + 3 H(+)(out) = 2 Na(+)(out) + 3 H(+)(in). Functionally, na(+)/H(+) antiporter that extrudes sodium in exchange for external protons. The polypeptide is Na(+)/H(+) antiporter NhaB (Vibrio campbellii (strain ATCC BAA-1116)).